Consider the following 277-residue polypeptide: Ribosomal RNA small subunit methyltransferase A (277 aa).

The S-adenosyl-L-methionine site is built by Asn27, Leu29, Gly54, Glu75, Asp95, and Asn118.

Belongs to the class I-like SAM-binding methyltransferase superfamily. rRNA adenine N(6)-methyltransferase family. RsmA subfamily.

The protein localises to the cytoplasm. The catalysed reaction is adenosine(1518)/adenosine(1519) in 16S rRNA + 4 S-adenosyl-L-methionine = N(6)-dimethyladenosine(1518)/N(6)-dimethyladenosine(1519) in 16S rRNA + 4 S-adenosyl-L-homocysteine + 4 H(+). Its function is as follows. Specifically dimethylates two adjacent adenosines (A1518 and A1519) in the loop of a conserved hairpin near the 3'-end of 16S rRNA in the 30S particle. May play a critical role in biogenesis of 30S subunits. The polypeptide is Ribosomal RNA small subunit methyltransferase A (Chlamydia muridarum (strain MoPn / Nigg)).